The chain runs to 640 residues: Threonine--tRNA ligase (640 aa).

The TGS domain maps to 1–61 (MPTITLPDGS…ENDASLQIIT (61 aa)). The tract at residues 242–533 (DHRKIGKRLG…LIEHYEGAFP (292 aa)) is catalytic. Positions 333, 384, and 510 each coordinate Zn(2+).

Belongs to the class-II aminoacyl-tRNA synthetase family. Homodimer. Zn(2+) serves as cofactor.

It is found in the cytoplasm. The enzyme catalyses tRNA(Thr) + L-threonine + ATP = L-threonyl-tRNA(Thr) + AMP + diphosphate + H(+). In terms of biological role, catalyzes the attachment of threonine to tRNA(Thr) in a two-step reaction: L-threonine is first activated by ATP to form Thr-AMP and then transferred to the acceptor end of tRNA(Thr). Also edits incorrectly charged L-seryl-tRNA(Thr). In Pseudomonas savastanoi pv. phaseolicola (strain 1448A / Race 6) (Pseudomonas syringae pv. phaseolicola (strain 1448A / Race 6)), this protein is Threonine--tRNA ligase.